The primary structure comprises 328 residues: MMWRWSFLLLLLLLRHWALGKPSPDAGPHGQDRVHHGTPLSEAPHDDAHGNFQYDHEAFLGRDVAKEFDKLSPEESQARLGRIVDRMDLAGDSDGWVSLAELRAWIAHTQQRHIRDSVSAAWHTYDTDRDGRVGWEELRNATYGHYEPGEEFHDVEDAETYKKMLARDERRFRVADQDGDSMATREELTAFLHPEEFPHMRDIVVAETLEDLDKNKDGYVQVEEYIADLYSEEPGEEEPAWVQTERQQFREFRDLNKDGRLDGSEVGYWVLPPSQDQPLVEANHLLHESDTDKDGRLSKAEILSNWNMFVGSQATNYGEDLTRHHDEL.

An N-terminal signal peptide occupies residues 1-20 (MMWRWSFLLLLLLLRHWALG). Residues 24–48 (PDAGPHGQDRVHHGTPLSEAPHDDA) are disordered. EF-hand domains follow at residues 77–112 (QARL…TQQR), 113–148 (HIRD…HYEP), 163–198 (KMLA…EEFP), 200–235 (MRDI…EEPG), 241–276 (WVQT…PSQD), and 277–312 (QPLV…FVGS). The Ca(2+) site is built by Asp-92, Asp-94, Trp-96, Glu-101, Asp-126, Asp-128, Asp-130, Arg-132, and Glu-137. Asn-140 is a glycosylation site (N-linked (GlcNAc...) asparagine). Positions 176, 178, 180, 182, 187, 213, 215, 217, 219, 224, 254, 256, 258, 260, 265, 290, 292, 294, 296, and 301 each coordinate Ca(2+). A Prevents secretion from ER motif is present at residues 325–328 (HDEL).

This sequence belongs to the CREC family. Interacts with PCSK6 (immature form including the propeptide); probably involved in the maturation and the secretion of PCSK6. In terms of processing, degraded by PCSK6 and other endoproteases including FURIN and PCSK5. Post-translationally, N-glycosylated. Highly expressed in lung and heart. Also detected in liver, spleen, kidney, skeletal muscle, intestine, stomach, and brain.

The protein localises to the endoplasmic reticulum lumen. In terms of biological role, probable molecular chaperone assisting protein biosynthesis and transport in the endoplasmic reticulum. Required for the proper biosynthesis and transport of pulmonary surfactant-associated protein A/SP-A, pulmonary surfactant-associated protein D/SP-D and the lipid transporter ABCA3. By regulating both the proper expression and the degradation through the endoplasmic reticulum-associated protein degradation pathway of these proteins plays a crucial role in pulmonary surfactant homeostasis. Has an anti-fibrotic activity by negatively regulating the secretion of type I and type III collagens. This calcium-binding protein also transiently associates with immature PCSK6 and regulates its secretion. The chain is Reticulocalbin-3 from Mus musculus (Mouse).